The chain runs to 367 residues: Phosphoribosylaminoimidazole-succinocarboxamide synthase (367 aa).

The protein belongs to the SAICAR synthetase family.

It carries out the reaction 5-amino-1-(5-phospho-D-ribosyl)imidazole-4-carboxylate + L-aspartate + ATP = (2S)-2-[5-amino-1-(5-phospho-beta-D-ribosyl)imidazole-4-carboxamido]succinate + ADP + phosphate + 2 H(+). The protein operates within purine metabolism; IMP biosynthesis via de novo pathway; 5-amino-1-(5-phospho-D-ribosyl)imidazole-4-carboxamide from 5-amino-1-(5-phospho-D-ribosyl)imidazole-4-carboxylate: step 1/2. The sequence is that of Phosphoribosylaminoimidazole-succinocarboxamide synthase from Shewanella baltica (strain OS195).